Here is a 501-residue protein sequence, read N- to C-terminus: Beta-glucosidase 25 (501 aa).

Residues 1 to 19 (MSLLTLVHILVSFSACVEA) form the signal peptide. Q39 is an a beta-D-glucoside binding site. N107 is a glycosylation site (N-linked (GlcNAc...) asparagine). Residues H140 and 185-186 (NE) contribute to the a beta-D-glucoside site. E186 (proton donor) is an active-site residue. C205 and C213 are disulfide-bonded. A beta-D-glucoside-binding positions include Y329, E402, W452, 459–460 (EW), and F468. E402 serves as the catalytic Nucleophile. N478 carries N-linked (GlcNAc...) asparagine glycosylation.

It belongs to the glycosyl hydrolase 1 family.

It catalyses the reaction Hydrolysis of terminal, non-reducing beta-D-glucosyl residues with release of beta-D-glucose.. The chain is Beta-glucosidase 25 (BGLU25) from Oryza sativa subsp. japonica (Rice).